A 227-amino-acid chain; its full sequence is MSTWKNLFLQDSASPLMELLMCFHDHAMLILILITIMVSQMLLSMLFNKLSHRYLLEGQLIETIWTIIPAIILILIALPSLRLLYILDEINNPQLLIKIIGHQWYWSYEYSDYKNIEFDSYMIPTKELNSFNFRLLEVDNRTPIPYKTQIRILVTSADVIHSWTIPSMSIKIDGTPGRLNQANLIANRSSIFFGQCSEICGANHSFMPIVLESITPNLFLNWVISKA.

Residues 1 to 26 (MSTWKNLFLQDSASPLMELLMCFHDH) lie on the Mitochondrial intermembrane side of the membrane. Residues 27-48 (AMLILILITIMVSQMLLSMLFN) traverse the membrane as a helical segment. Residues 49 to 62 (KLSHRYLLEGQLIE) are Mitochondrial matrix-facing. The helical transmembrane segment at 63–82 (TIWTIIPAIILILIALPSLR) threads the bilayer. The Mitochondrial intermembrane segment spans residues 83–227 (LLYILDEINN…LFLNWVISKA (145 aa)). Cu cation-binding residues include H161, C196, E198, C200, H204, and M207. A Mg(2+)-binding site is contributed by E198.

This sequence belongs to the cytochrome c oxidase subunit 2 family. Component of the cytochrome c oxidase (complex IV, CIV), a multisubunit enzyme composed of a catalytic core of 3 subunits and several supernumerary subunits. The complex exists as a monomer or a dimer and forms supercomplexes (SCs) in the inner mitochondrial membrane with ubiquinol-cytochrome c oxidoreductase (cytochrome b-c1 complex, complex III, CIII). Cu cation serves as cofactor.

It is found in the mitochondrion inner membrane. It catalyses the reaction 4 Fe(II)-[cytochrome c] + O2 + 8 H(+)(in) = 4 Fe(III)-[cytochrome c] + 2 H2O + 4 H(+)(out). In terms of biological role, component of the cytochrome c oxidase, the last enzyme in the mitochondrial electron transport chain which drives oxidative phosphorylation. The respiratory chain contains 3 multisubunit complexes succinate dehydrogenase (complex II, CII), ubiquinol-cytochrome c oxidoreductase (cytochrome b-c1 complex, complex III, CIII) and cytochrome c oxidase (complex IV, CIV), that cooperate to transfer electrons derived from NADH and succinate to molecular oxygen, creating an electrochemical gradient over the inner membrane that drives transmembrane transport and the ATP synthase. Cytochrome c oxidase is the component of the respiratory chain that catalyzes the reduction of oxygen to water. Electrons originating from reduced cytochrome c in the intermembrane space (IMS) are transferred via the dinuclear copper A center (CU(A)) of subunit 2 and heme A of subunit 1 to the active site in subunit 1, a binuclear center (BNC) formed by heme A3 and copper B (CU(B)). The BNC reduces molecular oxygen to 2 water molecules using 4 electrons from cytochrome c in the IMS and 4 protons from the mitochondrial matrix. The chain is Cytochrome c oxidase subunit 2 (COII) from Sitophilus granarius (Granary weevil).